A 421-amino-acid polypeptide reads, in one-letter code: Enolase (421 aa).

Gln165 is a (2R)-2-phosphoglycerate binding site. Residue Glu207 is the Proton donor of the active site. Residues Asp244, Glu285, and Asp312 each contribute to the Mg(2+) site. (2R)-2-phosphoglycerate-binding residues include Lys337, Arg366, Ser367, and Lys388. The active-site Proton acceptor is Lys337.

It belongs to the enolase family. Mg(2+) serves as cofactor.

The protein localises to the cytoplasm. It is found in the secreted. It localises to the cell surface. The enzyme catalyses (2R)-2-phosphoglycerate = phosphoenolpyruvate + H2O. It functions in the pathway carbohydrate degradation; glycolysis; pyruvate from D-glyceraldehyde 3-phosphate: step 4/5. In terms of biological role, catalyzes the reversible conversion of 2-phosphoglycerate (2-PG) into phosphoenolpyruvate (PEP). It is essential for the degradation of carbohydrates via glycolysis. The polypeptide is Enolase (Ehrlichia canis (strain Jake)).